We begin with the raw amino-acid sequence, 536 residues long: MSDIGVFNAAVGADRAGLRNLKRVFWNLEAPGLYEQALQRGEAQLAVGGALVAETGIHTGRSPKDKFVVRDAETEAQVWWDNNGAISPEQFDRLHADFIAHAEGRELFAQDLYGGAEPAHRVRARVFTEFAWHSLFIRNLLIRPERDELATYEPDLTIIDLPSFKADPARHGVRSETMIACDFTRRIMLIGGTSYAGEMKKSVFTYLNYILPQAGVMPMHCSANVGGAGDSALFFGLSGTGKTTLSSDPARALLGDDEHGWSPKGIFNFEGGCYAKTIRLSREAEPEIYATTERFGTVMENVVIDPVTRLPDFDDASRTENTRCAYPLPFIPNASPTGRAGHPKNIVMLTCDAFGVLPPIAKLTGAEAMYHFLSGYTAKVAGTEKGLKGPEATFSTCFGAPFMPRHPSVYGNLLRDLIARHHVDCWLVNTGWTGGGVGTGRRMPIRVTRRLLTAALDGSLAKADFRRDPYFGFAVPTSVPGVEPHILYPVKTWQDKAAFAETAKKLVEMFQANFKRFEAHVDADVRAAEPTMSIAA.

Residues Arg61, Tyr195, and Lys201 each coordinate substrate. ATP contacts are provided by residues Lys201, His220, and Gly236 to Thr244. Residues Lys201 and His220 each coordinate Mn(2+). Asp257 serves as a coordination point for Mn(2+). Positions 285, 323, and 448 each coordinate ATP. Position 323 (Arg323) interacts with substrate.

This sequence belongs to the phosphoenolpyruvate carboxykinase (ATP) family. Mn(2+) serves as cofactor.

The protein resides in the cytoplasm. It carries out the reaction oxaloacetate + ATP = phosphoenolpyruvate + ADP + CO2. It functions in the pathway carbohydrate biosynthesis; gluconeogenesis. Its function is as follows. Involved in the gluconeogenesis. Catalyzes the conversion of oxaloacetate (OAA) to phosphoenolpyruvate (PEP) through direct phosphoryl transfer between the nucleoside triphosphate and OAA. This Methylobacterium nodulans (strain LMG 21967 / CNCM I-2342 / ORS 2060) protein is Phosphoenolpyruvate carboxykinase (ATP).